The sequence spans 572 residues: MDYPSFHEDPTKDESTVAEQRKGQSNEEKPLIDLNDSLDEQRNAYNEHCKNHDQQPSQQVRNMEDEANQYEQTDSSSDQEVMNEKQSLDKENRNDNIPHENNPGQQEINEPIFDFHMFLEQLRSSSAEPVAKYLKSFLSEFTKRRWTVNYQVKLIRDFLKFINEKIEQYEPWASGSQAEIDNAKEGMEKLVLNRLYTSLFSPEIAKSGIPLSSEHSDDVEEDRVLSEKMELFQWITEENLDIKKQKSSSKFFKLAADELRRINDYHAPRDKIICLLNCCKVIFSYLRNVVKEESADMFVPILIFVVLQARPAHLVSNIQYIQRFRSPEKLTGEVMYYLSTLMGAMSFIETLDCSSLTITEEEFNAQIEKSIKKMEERKLSEKSESKTAVNENATYKDPVLSRGLSSSIDVSTGVALVNLPEELENMKYLQIDTPESKEYPRSTRPRGSSHSGSFTTDSGKRSRRNSNKYVGSSDRPPYRVSRAYSSSATHSPIVHEEQPVDDGLQQNDDLREATTASLETAEAERLQAREKAEAITALRAMFPAFDSEVIEVVLNAQQGRLSSSIDSLLEMS.

Composition is skewed to basic and acidic residues over residues 1–31 (MDYP…EKPL) and 39–53 (DEQR…KNHD). The interval 1-108 (MDYPSFHEDP…HENNPGQQEI (108 aa)) is disordered. A compositionally biased stretch (polar residues) spans 69-80 (QYEQTDSSSDQE). Positions 82–98 (MNEKQSLDKENRNDNIP) are enriched in basic and acidic residues. The 139-residue stretch at 219–357 (VEEDRVLSEK…IETLDCSSLT (139 aa)) folds into the VPS9 domain. The segment at 430-502 (QIDTPESKEY…IVHEEQPVDD (73 aa)) is disordered. Positions 445-457 (PRGSSHSGSFTTD) are enriched in polar residues. Positions 529–571 (REKAEAITALRAMFPAFDSEVIEVVLNAQQGRLSSSIDSLLEM) constitute a CUE domain.

Functionally, required for vacuolar protein sorting; may be required for the consumption of transport vesicles containing vacuolar protein precursors. Required for vacuolar fusion. In Schizosaccharomyces pombe (strain 972 / ATCC 24843) (Fission yeast), this protein is Vacuolar protein sorting-associated protein vps901 (vps901).